The sequence spans 386 residues: MASILTLDGLYAEVPKFLPEALREGCAGKNPLSFYIQQILNLMGCDGNEYHVLFTSSSEEANTHMIMAAVRRHLLRTRQRPHVIIGAAEPPSVTECVKALAQEKRCVYTIIPLKNFEIDPVAVYDAIQSNTCLACISGTNAVVKTFNKLQDISKVLRGIPLHSEVSDLVYQGCIKQNPPADSFSINSLYGFLGVGVLGMKKKVMQGLGPLIFGGGLRGGSPNIPGIHAMYRTLTQQRPSMKKINTIHKLFMKTLKKHQHIYLPIGGVSAEDMSAENSAKDIPSTDVPVGPKGLPGYILFSVGHRAEELQKKIFTKFNIKVGRIVDLQEILFRIKIPQKYWETLLFIQLRDNLTKEDIKRVMVVLMHLDTITPRGSLPPPSYSSSFS.

Residues 58–59 (SE) and 184–186 (SIN) each bind pyridoxal 5'-phosphate.

The protein belongs to the class-V pyridoxal-phosphate-dependent aminotransferase family. NifS/IscS subfamily. Pyridoxal 5'-phosphate serves as cofactor.

It is found in the virion. The sequence is that of NifS-like protein from Ornithodoros (relapsing fever ticks).